Here is a 259-residue protein sequence, read N- to C-terminus: HTH-type transcriptional regulator Rv1931c (259 aa).

The span at 104 to 121 shows a compositional bias: basic residues; it reads SHRRHRPRAGTGRRRPRH. A disordered region spans residues 104–170; that stretch reads SHRRHRPRAG…GAGGHRGRAG (67 aa). The region spanning 174–257 is the HTH araC/xylS-type domain; that stretch reads RIGELAQRAA…GISPDQYRKA (84 aa). 2 consecutive DNA-binding regions (H-T-H motif) follow at residues 176-197 and 224-247; these read GELA…SDEV and VVAI…IRRV.

Functionally, controls the expression of genes important for virulence. The chain is HTH-type transcriptional regulator Rv1931c from Mycobacterium tuberculosis (strain ATCC 25618 / H37Rv).